The sequence spans 334 residues: Geminin coiled-coil domain-containing protein 1 (334 aa).

Positions 82 to 119 form a coiled coil; the sequence is SQLYRNKQLQDTLVQKEEELARLHEENNHLRQYLNSAL. The segment at 143 to 167 is disordered; that stretch reads FRKGKRKSKEQRYSPAEIPHPKNAK.

It belongs to the GEMC1 family. In terms of processing, highly phosphorylated by CDK2; stimulates initiation of DNA replication.

It is found in the nucleus. Its function is as follows. Regulator of DNA replication. Promotes initiation of chromosomal DNA replication by mediating TOPBP1- and CDK2-dependent recruitment of CDC45L onto replication origins. In Homo sapiens (Human), this protein is Geminin coiled-coil domain-containing protein 1 (GMNC).